The primary structure comprises 215 residues: Ras-related protein Rab-5A (215 aa).

Residues Ser-29, Ala-30, Gly-32, Lys-33, Ser-34, Ser-35, His-46, Glu-47, Thr-52, and Gly-78 each contribute to the GTP site. Ser-34 lines the Mg(2+) pocket. 2 consecutive short sequence motifs (switch) follow at residues Gln-44–Ala-56 and Ala-77–Ala-93. Thr-52 contacts Mg(2+). Phosphoserine is present on Ser-84. Positions 133, 134, 136, 164, and 165 each coordinate GTP. The segment at Leu-181–Asn-215 is disordered. The span at Glu-203–Asn-215 shows a compositional bias: polar residues. S-geranylgeranyl cysteine attachment occurs at residues Cys-212 and Cys-213.

The protein belongs to the small GTPase superfamily. Rab family. Interacts with GDI1; this promotes dissociation from membranes; phosphorylation at Ser-84 disrupts this interaction. Interacts with GDI2; phosphorylation at Ser-84 disrupts the interaction. Binds EEA1. Interacts with ALS2CL, SUN2, ZFYVE20 and RUFY1. Interacts with RIN1 and GAPVD1, which regulate its pathway, probably by acting as a GEF. Interacts with SGSM1 and SGSM3. Interacts with PIK3CB. Interacts with RABEP1 and RINL. Interacts with OCRL and INPP5F. May be a component of a complex composed of RAB5A, DYN2 and PIK3C3. Does not interact with the BLOC-3 complex (heterodimer of HPS1 and HPS4). Interacts with CLN5. Interacts with APPL2. Interacts with F8A1/F8A2/F8A3. Found in a complex with F8A1/F8A2/F8A3, HTT and RAB5A; mediates the recruitment of HTT by RAB5A onto early endosomes. Interacts with ATP9A. Interacts with PPP1R21; mediates the recruitment of FERRY complex by RAB5A onto early endosomes. The cofactor is Mg(2+). In terms of processing, phosphorylation of Ser-84 in the switch II region by LRRK2 prevents the association of RAB regulatory proteins, including RAB GDP dissociation inhibitors GDI1 and GDI2.

It is found in the cell membrane. The protein localises to the early endosome membrane. It localises to the melanosome. The protein resides in the cytoplasmic vesicle. Its subcellular location is the cell projection. It is found in the ruffle. The protein localises to the cytoplasm. It localises to the cytosol. The protein resides in the membrane. Its subcellular location is the phagosome membrane. It is found in the endosome membrane. It carries out the reaction GTP + H2O = GDP + phosphate + H(+). Regulated by guanine nucleotide exchange factors (GEFs) including RINL, which promote the exchange of bound GDP for free GTP. Regulated by GTPase activating proteins (GAPs) which increase the GTP hydrolysis activity. Inhibited by GDP dissociation inhibitors (GDIs). Its function is as follows. The small GTPases Rab are key regulators of intracellular membrane trafficking, from the formation of transport vesicles to their fusion with membranes. Rabs cycle between an inactive GDP-bound form and an active GTP-bound form that is able to recruit to membranes different sets of downstream effectors directly responsible for vesicle formation, movement, tethering and fusion. RAB5A is required for the fusion of plasma membranes and early endosomes. Contributes to the regulation of filopodia extension. Required for the exosomal release of SDCBP, CD63, PDCD6IP and syndecan. Regulates maturation of apoptotic cell-containing phagosomes, probably downstream of DYN2 and PIK3C3. In Canis lupus familiaris (Dog), this protein is Ras-related protein Rab-5A (RAB5A).